The sequence spans 96 residues: ATP synthase subunit c (96 aa).

Helical transmembrane passes span 28 to 50 and 75 to 95; these read LGAG…NIGA and AVTE…LFVL.

The protein belongs to the ATPase C chain family. As to quaternary structure, F-type ATPases have 2 components, F(1) - the catalytic core - and F(0) - the membrane proton channel. F(1) has five subunits: alpha(3), beta(3), gamma(1), delta(1), epsilon(1). F(0) has three main subunits: a(1), b(2) and c(10-14). The alpha and beta chains form an alternating ring which encloses part of the gamma chain. F(1) is attached to F(0) by a central stalk formed by the gamma and epsilon chains, while a peripheral stalk is formed by the delta and b chains.

It localises to the cell inner membrane. Its function is as follows. F(1)F(0) ATP synthase produces ATP from ADP in the presence of a proton or sodium gradient. F-type ATPases consist of two structural domains, F(1) containing the extramembraneous catalytic core and F(0) containing the membrane proton channel, linked together by a central stalk and a peripheral stalk. During catalysis, ATP synthesis in the catalytic domain of F(1) is coupled via a rotary mechanism of the central stalk subunits to proton translocation. Key component of the F(0) channel; it plays a direct role in translocation across the membrane. A homomeric c-ring of between 10-14 subunits forms the central stalk rotor element with the F(1) delta and epsilon subunits. The polypeptide is ATP synthase subunit c (Petrotoga mobilis (strain DSM 10674 / SJ95)).